The chain runs to 249 residues: Oxidoreductase asL5 (249 aa).

Residues isoleucine 21, lysine 45, asparagine 90, tyrosine 155, lysine 159, isoleucine 188, and threonine 190 each coordinate NADP(+). Tyrosine 155 (proton acceptor) is an active-site residue. Lysine 159 serves as the catalytic Lowers pKa of active site Tyr.

Belongs to the short-chain dehydrogenases/reductases (SDR) family.

Oxidoreductase; part of the gene cluster that mediates the biosynthesis of xenovulene A, an unusual meroterpenoid that has potent inhibitory effects on the human gamma-aminobutyrate A (GABAA) benzodiazepine receptor. The first step of xenovulene A biosynthesis is the biosynthesis of 3-methylorcinaldehyde performed by the non-reducing polyketide synthase aspks1. The salicylate hydroxylase asL1 then catalyzes the oxidative dearomatization of 3-methylorcinaldehyde to yield a dearomatized hydroxycyclohexadione. The 2-oxoglutarate-dependent dioxygenase asL3 further catalyzes the oxidative ring expansion to provide the first tropolone metabolite. The cytochrome P450 monooxygenase asR2 allows the synthesis of tropolone hemiacetal. In parallel, a previously unrecognised class of terpene cyclase, asR6, produces alpha-humulene from farnesylpyrophosphate (FPP). The putative Diels-Alderase asR5 probably catalyzes the formation of the tropolone-humulene skeleton by linking humulene and the polyketide moiety. Oxidative-ring contractions catalyzed by asL4 and asL6 then processively remove carbon atoms from the polyketide to yield xenovulene A. The chain is Oxidoreductase asL5 from Sarocladium schorii (Acremonium strictum (strain IMI 501407)).